We begin with the raw amino-acid sequence, 274 residues long: Large ribosomal subunit protein uL2 (274 aa).

Disordered regions lie at residues 21–59 and 223–274; these read KVGL…GGHK and VAMN…QLKG. A compositionally biased stretch (low complexity) spans 32-42; sequence SLTSGKKSSGG. Positions 45 to 59 are enriched in basic residues; the sequence is NHGRITTRHRGGGHK. The segment covering 263–274 has biased composition (basic and acidic residues); the sequence is KSSDKYIKQLKG.

This sequence belongs to the universal ribosomal protein uL2 family. Part of the 50S ribosomal subunit. Forms a bridge to the 30S subunit in the 70S ribosome.

In terms of biological role, one of the primary rRNA binding proteins. Required for association of the 30S and 50S subunits to form the 70S ribosome, for tRNA binding and peptide bond formation. It has been suggested to have peptidyltransferase activity; this is somewhat controversial. Makes several contacts with the 16S rRNA in the 70S ribosome. The polypeptide is Large ribosomal subunit protein uL2 (Wolbachia sp. subsp. Drosophila simulans (strain wRi)).